A 127-amino-acid polypeptide reads, in one-letter code: Fluoride-specific ion channel FluC (127 aa).

4 consecutive transmembrane segments (helical) span residues 3–23 (ALLLVGAGGAAGAVARYLLGV), 36–56 (GTFAANILGGFLMGLLAGGLA), 72–92 (VGALGGFTTFSAYSLEVALMI), and 101–121 (FAYSLGSVALAVAALFAGLLL). Na(+)-binding residues include Gly-76 and Thr-79.

It belongs to the fluoride channel Fluc/FEX (TC 1.A.43) family.

The protein localises to the cell inner membrane. The enzyme catalyses fluoride(in) = fluoride(out). With respect to regulation, na(+) is not transported, but it plays an essential structural role and its presence is essential for fluoride channel function. Its function is as follows. Fluoride-specific ion channel. Important for reducing fluoride concentration in the cell, thus reducing its toxicity. This Phenylobacterium zucineum (strain HLK1) protein is Fluoride-specific ion channel FluC.